We begin with the raw amino-acid sequence, 130 residues long: Sec-independent protein translocase protein TatB (130 aa).

The helical transmembrane segment at 1 to 21 threads the bilayer; that stretch reads MFDIGFWELVLIFVVGLVVLG. Positions 85 to 130 are disordered; it reads LKQAAQSVNRPYADVSAKNEATSSSSSDATHQTEATKTSAANTKSE. Over residues 112–130 the composition is skewed to polar residues; that stretch reads DATHQTEATKTSAANTKSE.

Belongs to the TatB family. The Tat system comprises two distinct complexes: a TatABC complex, containing multiple copies of TatA, TatB and TatC subunits, and a separate TatA complex, containing only TatA subunits. Substrates initially bind to the TatABC complex, which probably triggers association of the separate TatA complex to form the active translocon.

The protein localises to the cell inner membrane. Its function is as follows. Part of the twin-arginine translocation (Tat) system that transports large folded proteins containing a characteristic twin-arginine motif in their signal peptide across membranes. Together with TatC, TatB is part of a receptor directly interacting with Tat signal peptides. TatB may form an oligomeric binding site that transiently accommodates folded Tat precursor proteins before their translocation. The sequence is that of Sec-independent protein translocase protein TatB from Vibrio vulnificus (strain CMCP6).